The following is a 4660-amino-acid chain: Low-density lipoprotein receptor-related protein 2 (4660 aa).

The signal sequence occupies residues 1–25 (MERGAAAAAWMLLLAIAACLEPVSS). Topologically, residues 26 to 4425 (QECGSGNFRC…LSRGIPPGTT (4400 aa)) are extracellular. LDL-receptor class A domains follow at residues 27–63 (ECGS…IGCP), 66–104 (SCES…QNCA), 107–143 (TCSA…RNCH), 141–180 (NCHY…ANCT), 182–218 (LCSQ…RNCN), and 221–257 (TCGG…DGCE). 18 disulfides stabilise this stretch: Cys28-Cys40, Cys35-Cys53, Cys47-Cys62, Cys67-Cys80, Cys74-Cys93, Cys87-Cys103, Cys108-Cys120, Cys115-Cys133, Cys127-Cys142, Cys142-Cys157, Cys152-Cys170, Cys164-Cys179, Cys183-Cys195, Cys190-Cys208, Cys202-Cys217, Cys222-Cys234, Cys229-Cys247, and Cys241-Cys256. Asn159 and Asn178 each carry an N-linked (GlcNAc...) asparagine glycan. A glycan (N-linked (GlcNAc...) asparagine) is linked at Asn259. The LDL-receptor class A 7 domain maps to 264-307 (RCYPREWACPGSGRCISIDKVCDGVPDCPEGDDENNVTSGRTCG). Intrachain disulfides connect Cys265/Cys278, Cys272/Cys291, and Cys285/Cys306. 2 N-linked (GlcNAc...) asparagine glycosylation sites follow: Asn299 and Asn340. The 36-residue stretch at 347-382 (DFDDCQIWGICDQKCENRQGRHQCLCEEGYILERGQ) folds into the EGF-like 1; calcium-binding domain. Cystine bridges form between Cys351/Cys361 and Cys357/Cys370. LDL-receptor class B repeat units lie at residues 435 to 477 (HRVF…DWIN), 478 to 520 (NKLY…DPTV), 521 to 567 (GYLF…DLVS), and 568 to 612 (KRVY…FEEH). A glycan (N-linked (GlcNAc...) asparagine) is linked at Asn462. N-linked (GlcNAc...) asparagine glycosylation occurs at Asn657. 4 LDL-receptor class B repeats span residues 752–794 (STVF…DWIS), 795–836 (RNLY…HPTA), 837–880 (GYMF…DWSA), and 881–924 (SRLY…FKDN). Asn865 is a glycosylation site (N-linked (GlcNAc...) asparagine). Residues 1024 to 1060 (QCGSLSFPCNNGKCVPSFFRCDGVDDCHDNSDEHQCG) enclose the LDL-receptor class A 8 domain. 3 disulfides stabilise this stretch: Cys1025/Cys1037, Cys1032/Cys1050, and Cys1044/Cys1059. Asn1063 is a glycosylation site (N-linked (GlcNAc...) asparagine). 7 consecutive LDL-receptor class A domains span residues 1065-1102 (TCSP…QNCP), 1109-1145 (TCPS…KNCQ), 1149-1185 (TCQP…AGCV), 1187-1224 (NCTS…AGCP), 1230-1268 (MCHP…TGCV), 1271-1307 (TCSP…KDCP), and 1312-1350 (HCPS…PLCN). 9 disulfide bridges follow: Cys1066–Cys1079, Cys1073–Cys1092, Cys1086–Cys1101, Cys1110–Cys1122, Cys1117–Cys1135, Cys1129–Cys1144, Cys1150–Cys1162, Cys1157–Cys1175, and Cys1169–Cys1184. Trp1127, Asp1130, Asp1132, Asp1134, Asp1140, and Glu1141 together coordinate Ca(2+). N-linked (GlcNAc...) asparagine glycosylation is present at Asn1187. 18 disulfides stabilise this stretch: Cys1188–Cys1201, Cys1195–Cys1214, Cys1208–Cys1223, Cys1231–Cys1244, Cys1238–Cys1257, Cys1251–Cys1267, Cys1272–Cys1284, Cys1279–Cys1297, Cys1291–Cys1306, Cys1313–Cys1326, Cys1320–Cys1339, Cys1333–Cys1349, Cys1354–Cys1365, Cys1361–Cys1374, Cys1376–Cys1389, Cys1395–Cys1405, Cys1401–Cys1414, and Cys1416–Cys1429. Ca(2+) contacts are provided by Tyr1206, Asp1209, Val1211, Asp1213, Asp1219, and Glu1220. Residues Asn1328 and Asn1341 are each glycosylated (N-linked (GlcNAc...) asparagine). The EGF-like 2 domain maps to 1350–1390 (NQDSCSHFNGGCTHQCMQGPFGATCLCPLGYQLANDTKTCE). Residue Asn1384 is glycosylated (N-linked (GlcNAc...) asparagine). The region spanning 1391–1430 (DINECDIPGFCSQHCVNMRGSFRCACDPEYTLESDGRTCK) is the EGF-like 3; calcium-binding domain. 3 N-linked (GlcNAc...) asparagine glycosylation sites follow: Asn1451, Asn1497, and Asn1551. 5 LDL-receptor class B repeats span residues 1479–1521 (GRVF…DWIG), 1522–1564 (RNLY…DPRM), 1567–1610 (NVMF…DYPN), 1611–1655 (RLIY…FEDF), and 1656–1696 (VYWT…IHPS). N-linked (GlcNAc...) asparagine glycans are attached at residues Asn1676, Asn1733, and Asn1811. LDL-receptor class B repeat units follow at residues 1791 to 1833 (QFIY…DWVS), 1834 to 1883 (RNIY…DPAR), 1884 to 1931 (GKLY…DIQE), 1932 to 1973 (QKLY…YGSF), 1974 to 2014 (LYYS…YHRR), 2108 to 2157 (GFIY…DWAA), 2158 to 2202 (GNLY…DPKH), 2203 to 2246 (RYLF…DHDT), and 2247 to 2290 (GYIY…FGES). Residues Asn2134, Asn2178, and Asn2225 are each glycosylated (N-linked (GlcNAc...) asparagine). Residue Asn2396 is glycosylated (N-linked (GlcNAc...) asparagine). 5 LDL-receptor class B repeats span residues 2432 to 2478 (NRIF…DWIN), 2479 to 2519 (RRIY…DPCR), 2520 to 2563 (GYMY…DLET), 2564 to 2605 (DLLY…YGQY), and 2606 to 2647 (IYWT…VVKT). Residues Asn2488 and Asn2548 are each glycosylated (N-linked (GlcNAc...) asparagine). LDL-receptor class A domains follow at residues 2700–2738 (RCNQ…TVCA), 2741–2777 (TCRS…AGCL), 2780–2819 (NCNS…KNCP), 2822–2861 (TCPP…IYCA), 2864–2902 (TCRS…DTCG), 2907–2946 (TCRA…HHCE), 2949–2991 (NCSS…QNCT), 2994–3030 (TCSA…RGCS), 3033–3071 (PCHA…HLCH), and 3076–3112 (TCPL…KGCG). Intrachain disulfides connect Cys2701/Cys2713, Cys2708/Cys2726, Cys2720/Cys2737, Cys2742/Cys2754, Cys2749/Cys2767, Cys2761/Cys2776, Cys2781/Cys2794, Cys2789/Cys2807, Cys2801/Cys2818, Cys2823/Cys2836, Cys2830/Cys2849, Cys2843/Cys2860, Cys2865/Cys2878, Cys2872/Cys2891, Cys2885/Cys2901, Cys2908/Cys2920, Cys2915/Cys2933, and Cys2927/Cys2945. N-linked (GlcNAc...) asparagine glycosylation is present at Asn2782. The N-linked (GlcNAc...) asparagine glycan is linked to Asn2810. N-linked (GlcNAc...) asparagine glycosylation is present at Asn2949. 18 disulfide bridges follow: Cys2950-Cys2967, Cys2957-Cys2980, Cys2974-Cys2990, Cys2995-Cys3007, Cys3002-Cys3020, Cys3014-Cys3029, Cys3034-Cys3046, Cys3041-Cys3059, Cys3053-Cys3070, Cys3077-Cys3089, Cys3084-Cys3102, Cys3096-Cys3111, Cys3116-Cys3128, Cys3124-Cys3137, Cys3139-Cys3152, Cys3158-Cys3169, Cys3165-Cys3178, and Cys3180-Cys3193. N-linked (GlcNAc...) asparagine glycosylation is present at Asn2989. The EGF-like 4 domain occupies 3112–3153 (GINECLDSSISRCDHNCTDTITSFYCSCLPGYKLMSDKRSCV). A glycan (N-linked (GlcNAc...) asparagine) is linked at Asn3127. Positions 3154 to 3194 (DIDECKESPQLCSQKCENVVGSYICKCAPGYIREPDGKSCR) constitute an EGF-like 5; calcium-binding domain. Residues Asn3213, Asn3259, Asn3317, and Asn3357 are each glycosylated (N-linked (GlcNAc...) asparagine). LDL-receptor class B repeat units follow at residues 3241 to 3283 (KRLY…DWVS), 3284 to 3326 (RKLY…EHPR), 3335 to 3378 (GHVY…DYTN), 3379 to 3421 (DLLY…FEDT), and 3422 to 3462 (VFWT…YHPY). N-linked (GlcNAc...) asparagine glycosylation occurs at Asn3448. LDL-receptor class A domains lie at 3513-3551 (MCSS…DLCP), 3554-3592 (FCRL…VLCE), 3595-3633 (RCES…SHCA), 3636-3674 (TCRP…DECT), 3679-3717 (NCDN…QGCE), 3720-3757 (PCHP…ENCV), 3760-3796 (ECSE…RDCE), and 3799-3835 (TCHP…SACP). Intrachain disulfides connect Cys3514/Cys3527, Cys3521/Cys3540, Cys3534/Cys3550, Cys3555/Cys3567, Cys3562/Cys3580, Cys3574/Cys3591, Cys3596/Cys3608, Cys3603/Cys3621, Cys3615/Cys3632, Cys3637/Cys3649, Cys3644/Cys3662, Cys3656/Cys3673, Cys3680/Cys3694, Cys3688/Cys3707, Cys3701/Cys3716, Cys3721/Cys3734, Cys3729/Cys3747, Cys3741/Cys3756, Cys3761/Cys3773, Cys3768/Cys3786, Cys3780/Cys3795, Cys3800/Cys3812, Cys3807/Cys3825, and Cys3819/Cys3834. Asn3566 carries N-linked (GlcNAc...) asparagine glycosylation. Asn3682 carries N-linked (GlcNAc...) asparagine glycosylation. N-linked (GlcNAc...) asparagine glycosylation occurs at Asn3840. 3 consecutive LDL-receptor class A domains span residues 3843-3881 (YCPA…HLCF), 3884-3923 (PCES…EHCR), and 3929-3965 (PCTD…TGCN). 9 disulfides stabilise this stretch: Cys3844/Cys3856, Cys3851/Cys3869, Cys3863/Cys3880, Cys3885/Cys3898, Cys3893/Cys3911, Cys3905/Cys3922, Cys3930/Cys3942, Cys3937/Cys3955, and Cys3949/Cys3964. Residues 3968-4003 (DNRTCAENICEQNCTQLSSGGFICSCRPGFKPSTSD) enclose the EGF-like 6 domain. Residues Asn3969 and Asn3980 are each glycosylated (N-linked (GlcNAc...) asparagine). Intrachain disulfides connect Cys3972–Cys3981, Cys3977–Cys3991, Cys4013–Cys4023, Cys4019–Cys4032, and Cys4034–Cys4049. The EGF-like 7; calcium-binding domain maps to 4009–4050 (DINECEEFGICPQSCRNSKGSYECFCVDGFKSMSTHYGERCA). Asn4070 is a glycosylation site (N-linked (GlcNAc...) asparagine). LDL-receptor class B repeat units lie at residues 4156–4198 (RHIY…NPKL), 4199–4242 (GLMF…DYLN), and 4244–4285 (DRVY…FEDK). A glycan (N-linked (GlcNAc...) asparagine) is linked at Asn4329. Positions 4379–4413 (MPPPCRCMHGGNCYFDENELPKCKCSSGYSGEYCE) constitute an EGF-like 8 domain. 3 disulfide bridges follow: Cys4383–Cys4391, Cys4385–Cys4401, and Cys4403–Cys4412. A helical membrane pass occupies residues 4426–4446 (MAVLLTFVIVIIVGALVLVGL). Residues 4447-4660 (FHYRKTGSLL…ANLVKEDSDV (214 aa)) are Cytoplasmic-facing. The SH3-binding motif lies at 4454 to 4463 (SLLPTLPKLP). The PxLPxI/L motif 1; mediates interaction with ANKRA2 motif lies at 4457-4462 (PTLPKL). Positions 4460–4465 (PKLPSL) match the PxLPxI/L motif 2; mediates interaction with ANKRA2 motif. A phosphoserine mark is found at Ser4464 and Ser4467. The Endocytosis signal signature appears at 4522–4527 (FENPMY). The segment at 4559-4582 (NYGRPIDPSEIVPEPKPASPGADE) is disordered. Phosphoserine is present on Ser4577. The tract at residues 4597–4610 (QTTNFENPIYAEMD) is interaction with DAB2. An NPXY motif motif is present at residues 4603–4606 (NPIY). An SH2-binding motif is present at residues 4606-4609 (YAEM). The disordered stretch occupies residues 4617–4660 (VAVAPPPSPSLPAKASKRNLTPGYTATEDTFKDTANLVKEDSDV). The short motif at 4619 to 4630 (VAPPPSPSLPAK) is the SH3-binding element. A Phosphoserine modification is found at Ser4624. Positions 4634–4644 (RNLTPGYTATE) are enriched in polar residues. Thr4637 is subject to Phosphothreonine. At Ser4658 the chain carries Phosphoserine.

It belongs to the LDLR family. In terms of assembly, binds plasminogen, extracellular matrix components, plasminogen activator-plasminogen activator inhibitor type I complex, apolipoprotein E-enriched beta-VLDL, lipoprotein lipase, lactoferrin, CLU/clusterin and calcium. Forms a multimeric complex together with LRPAP1. Interacts (via PxLPxI/L motif) with ANKRA2 (via ankyrin repeats). Interacts with LRP2BP. Interacts (via NPXY motif) with DAB2; the interaction is not affected by tyrosine phosphorylation of the NPXY motif. Interacts with MB. Interacts with BMP4. Interacts with the Sonic hedgehog protein N-product which is the active product of SHH. Interacts with CST3 in a calcium-dependent manner. Interacts with the vitamin-D binding protein GC/DBP. Interacts with sex hormone-binding protein SHBG. Interacts with angiotensin-2. Also interacts with angiotensin 1-7. Interacts with APOM. Interacts with selenoprotein SEPP1. Interacts with LEP. Interacts with ALB. Interacts with the antiapoptotic protein BIRC5/survivin. Interacts with matrix metalloproteinase MMP2 in complex with metalloproteinase inhibitor TIMP1. In neurons, forms a trimeric complex with APP and APPB1/FE65. Interacts with LDLRAP1/ARH; mediates trafficking of LRP2 to the endocytic recycling compartment. Does not interact with beta-amyloid protein 40 alone but interacts with the complex composed of beta-amyloid protein 40 and CLU/APOJ. Interacts with MDK. In terms of processing, a fraction undergoes proteolytic cleavage of the extracellular domain at the cell membrane to generate a cytoplasmic tail fragment. This is internalized into the early endosome from where it trafficks in an LDLRAP1/ARH-dependent manner to the endocytic recycling compartment (ERC). In the ERC, it is further cleaved by gamma-secretase to release a fragment which translocates to the nucleus and mediates transcriptional repression. N-glycosylation is required for ligand binding. As to expression, in the inner ear, expressed in the lumen of the endolymphatic sac where it localizes to macrophage-like cells as well as to mitochondria-rich and ribosome-rich epithelial cells (at protein level). In the inner ear, expressed in marginal cells of the stria vascularis, epithelial cells at the spiral prominence, epithelial cells of Reissner's membrane facing the cochlear duct, and Kolliker's organ (at protein level). Expressed in the choroid plexus epithelium in the brain (at protein level). In the brain, also expressed in astrocytes (at protein level). Expression also detected in epithelial cells of the kidney glomerulus and proximal tubule, lung, epididymis and yolk sac.

Its subcellular location is the apical cell membrane. It localises to the endosome lumen. It is found in the membrane. The protein localises to the clathrin-coated pit. The protein resides in the cell projection. Its subcellular location is the dendrite. It localises to the axon. Its function is as follows. Multiligand endocytic receptor. Acts together with CUBN to mediate endocytosis of high-density lipoproteins. Mediates receptor-mediated uptake of polybasic drugs such as aprotinin, aminoglycosides and polymyxin B. In the kidney, mediates the tubular uptake and clearance of leptin. Also mediates transport of leptin across the blood-brain barrier through endocytosis at the choroid plexus epithelium. Endocytosis of leptin in neuronal cells is required for hypothalamic leptin signaling and leptin-mediated regulation of feeding and body weight. Mediates endocytosis and subsequent lysosomal degradation of CST3 in kidney proximal tubule cells. Mediates renal uptake of 25-hydroxyvitamin D3 in complex with the vitamin D3 transporter GC/DBP. Mediates renal uptake of metallothionein-bound heavy metals. Together with CUBN, mediates renal reabsorption of myoglobin. Mediates renal uptake and subsequent lysosomal degradation of APOM. Plays a role in kidney selenium homeostasis by mediating renal endocytosis of selenoprotein SEPP1. Mediates renal uptake of the antiapoptotic protein BIRC5/survivin which may be important for functional integrity of the kidney. Mediates renal uptake of matrix metalloproteinase MMP2 in complex with metalloproteinase inhibitor TIMP1. Mediates endocytosis of Sonic hedgehog protein N-product (ShhN), the active product of SHH. Also mediates ShhN transcytosis. In the embryonic neuroepithelium, mediates endocytic uptake and degradation of BMP4, is required for correct SHH localization in the ventral neural tube and plays a role in patterning of the ventral telencephalon. Required at the onset of neurulation to sequester SHH on the apical surface of neuroepithelial cells of the rostral diencephalon ventral midline and to control PTCH1-dependent uptake and intracellular trafficking of SHH. During neurulation, required in neuroepithelial cells for uptake of folate bound to the folate receptor FOLR1 which is necessary for neural tube closure. In the adult brain, negatively regulates BMP signaling in the subependymal zone which enables neurogenesis to proceed. In astrocytes, mediates endocytosis of ALB which is required for the synthesis of the neurotrophic factor oleic acid. Involved in neurite branching. During optic nerve development, required for SHH-mediated migration and proliferation of oligodendrocyte precursor cells. Mediates endocytic uptake and clearance of SHH in the retinal margin which protects retinal progenitor cells from mitogenic stimuli and keeps them quiescent. Plays a role in reproductive organ development by mediating uptake in reproductive tissues of androgen and estrogen bound to the sex hormone binding protein SHBG. Mediates endocytosis of angiotensin-2. Also mediates endocytosis of angiotensin 1-7. Binds to the complex composed of beta-amyloid protein 40 and CLU/APOJ and mediates its endocytosis and lysosomal degradation. Required for embryonic heart development. Required for normal hearing, possibly through interaction with estrogen in the inner ear. The sequence is that of Low-density lipoprotein receptor-related protein 2 (Lrp2) from Rattus norvegicus (Rat).